The sequence spans 1164 residues: DNA-directed RNA polymerase subunit beta' (1164 aa).

Zn(2+)-binding residues include cysteine 60, cysteine 62, cysteine 75, and cysteine 78. Mg(2+)-binding residues include aspartate 449, aspartate 451, and aspartate 453. Zn(2+) is bound by residues cysteine 776, cysteine 850, cysteine 857, and cysteine 860.

Belongs to the RNA polymerase beta' chain family. In terms of assembly, the RNAP catalytic core consists of 2 alpha, 1 beta, 1 beta' and 1 omega subunit. When a sigma factor is associated with the core the holoenzyme is formed, which can initiate transcription. Mg(2+) is required as a cofactor. Requires Zn(2+) as cofactor.

It catalyses the reaction RNA(n) + a ribonucleoside 5'-triphosphate = RNA(n+1) + diphosphate. Functionally, DNA-dependent RNA polymerase catalyzes the transcription of DNA into RNA using the four ribonucleoside triphosphates as substrates. In Moorella thermoacetica (strain ATCC 39073 / JCM 9320), this protein is DNA-directed RNA polymerase subunit beta'.